A 354-amino-acid chain; its full sequence is Heat-inducible transcription repressor HrcA (354 aa).

This sequence belongs to the HrcA family.

Negative regulator of class I heat shock genes (grpE-dnaK-dnaJ and groELS operons). Prevents heat-shock induction of these operons. This Herpetosiphon aurantiacus (strain ATCC 23779 / DSM 785 / 114-95) protein is Heat-inducible transcription repressor HrcA.